The following is a 351-amino-acid chain: DNA beta-glucosyltransferase (351 aa).

As to quaternary structure, monomer.

The catalysed reaction is Transfers a beta-D-glucosyl residue from UDP-alpha-D-glucose to a hydroxymethylcytosine residue in DNA.. It participates in genetic information processing; DNA modification. Functionally, catalyzes the transfer of glucose from uridine diphosphoglucose to 5-hydroxymethyl cytosine of T4 DNA to yield glucosyl 5-hydroxymethyl cytosine (glc-HMC). This DNA process seems to occur immediately after DNA synthesis since the DNA alpha-glucosyltransferase interacts with the clamp protein gp45. The glc-HMC modification protects the phage genome against its own nucleases and the host restriction endonuclease system. The glc-HMC modification also protects against the host CRISPR-Cas9 defense system. The polypeptide is DNA beta-glucosyltransferase (bgt) (Enterobacteria phage T4 (Bacteriophage T4)).